The sequence spans 136 residues: ATP synthase epsilon chain (136 aa).

It belongs to the ATPase epsilon chain family. As to quaternary structure, F-type ATPases have 2 components, CF(1) - the catalytic core - and CF(0) - the membrane proton channel. CF(1) has five subunits: alpha(3), beta(3), gamma(1), delta(1), epsilon(1). CF(0) has three main subunits: a, b and c.

It localises to the cell inner membrane. Produces ATP from ADP in the presence of a proton gradient across the membrane. This Agrobacterium fabrum (strain C58 / ATCC 33970) (Agrobacterium tumefaciens (strain C58)) protein is ATP synthase epsilon chain.